The primary structure comprises 194 residues: Adenylate kinase isoenzyme 1 (194 aa).

19–24 (GSGKGT) serves as a coordination point for ATP. Residues 39 to 68 (STGDLLRAEVSSGSERGKKLQAIMEKGELV) are NMP. AMP-binding positions include Thr-40, Arg-45, 66 to 68 (ELV), 95 to 98 (GYPR), and Gln-102. The tract at residues 132 to 142 (KRGETSGRVDD) is LID. Arg-133 lines the ATP pocket. Residues Arg-139 and Arg-150 each contribute to the AMP site. Residue Gly-178 participates in ATP binding.

It belongs to the adenylate kinase family. AK1 subfamily. In terms of assembly, monomer. Requires Mg(2+) as cofactor. Skeletal muscle.

The protein resides in the cytoplasm. It carries out the reaction a ribonucleoside 5'-phosphate + ATP = a ribonucleoside 5'-diphosphate + ADP. It catalyses the reaction AMP + ATP = 2 ADP. The catalysed reaction is dAMP + ATP = dADP + ADP. The enzyme catalyses dATP + AMP = dADP + ADP. It carries out the reaction dAMP + dATP = 2 dADP. It catalyses the reaction a 2'-deoxyribonucleoside 5'-diphosphate + ATP = a 2'-deoxyribonucleoside 5'-triphosphate + ADP. The catalysed reaction is a ribonucleoside 5'-diphosphate + ATP = a ribonucleoside 5'-triphosphate + ADP. The enzyme catalyses CDP + GTP = CTP + GDP. It carries out the reaction GDP + ATP = GTP + ADP. It catalyses the reaction UDP + ATP = UTP + ADP. The catalysed reaction is GTP + UDP = UTP + GDP. The enzyme catalyses dTDP + GTP = dTTP + GDP. It carries out the reaction dCDP + GTP = dCTP + GDP. It catalyses the reaction dGDP + ATP = dGTP + ADP. The catalysed reaction is dADP + GTP = dATP + GDP. The enzyme catalyses thiamine diphosphate + ADP = thiamine triphosphate + AMP. Its function is as follows. Catalyzes the reversible transfer of the terminal phosphate group between ATP and AMP. Also displays broad nucleoside diphosphate kinase activity. Plays an important role in cellular energy homeostasis and in adenine nucleotide metabolism. Also catalyzes at a very low rate the synthesis of thiamine triphosphate (ThTP) from thiamine diphosphate (ThDP) and ADP. The sequence is that of Adenylate kinase isoenzyme 1 from Gallus gallus (Chicken).